A 260-amino-acid polypeptide reads, in one-letter code: Thiazole synthase (260 aa).

K96 (schiff-base intermediate with DXP) is an active-site residue. Residues G157, 184–185, and 206–207 each bind 1-deoxy-D-xylulose 5-phosphate; these read AG and NT.

It belongs to the ThiG family. In terms of assembly, homotetramer. Forms heterodimers with either ThiH or ThiS.

It localises to the cytoplasm. The catalysed reaction is [ThiS sulfur-carrier protein]-C-terminal-Gly-aminoethanethioate + 2-iminoacetate + 1-deoxy-D-xylulose 5-phosphate = [ThiS sulfur-carrier protein]-C-terminal Gly-Gly + 2-[(2R,5Z)-2-carboxy-4-methylthiazol-5(2H)-ylidene]ethyl phosphate + 2 H2O + H(+). It participates in cofactor biosynthesis; thiamine diphosphate biosynthesis. Catalyzes the rearrangement of 1-deoxy-D-xylulose 5-phosphate (DXP) to produce the thiazole phosphate moiety of thiamine. Sulfur is provided by the thiocarboxylate moiety of the carrier protein ThiS. In vitro, sulfur can be provided by H(2)S. The polypeptide is Thiazole synthase (Rhodopseudomonas palustris (strain HaA2)).